Reading from the N-terminus, the 121-residue chain is uncharacterized protein (121 aa).

Residues 11–31 (IFQFFVFPFYYFLLIITEIGF) traverse the membrane as a helical segment.

Its subcellular location is the membrane. This is an uncharacterized protein from Schizosaccharomyces pombe (strain 972 / ATCC 24843) (Fission yeast).